A 371-amino-acid polypeptide reads, in one-letter code: Cytochrome b (371 aa).

4 helical membrane passes run 25-45, 69-90, 105-125, and 170-190; these read FGSMLLTCLALQVLTGFFLAV, WMMQNLHAIGASMFFICIYIHI, WMSGITLLITLMATAFFGYVL, and FFALHFILPFAIISLSSLHII. Heme b is bound by residues His-75 and His-89. The heme b site is built by His-174 and His-188. His-193 lines the a ubiquinone pocket. 4 helical membrane passes run 218–238, 280–300, 312–332, and 339–358; these read YKDLLLLTLMILFLFIIVSFF, LGGALALVMSIMILFTIPFMH, LSQLMFWTLVSTFITITWAAT, and YIMISQMTATLYFTFFLSIP.

Belongs to the cytochrome b family. The cytochrome bc1 complex contains 3 respiratory subunits (MT-CYB, CYC1 and UQCRFS1), 2 core proteins (UQCRC1 and UQCRC2) and probably 6 low-molecular weight proteins. Heme b is required as a cofactor.

The protein localises to the mitochondrion inner membrane. In terms of biological role, component of the ubiquinol-cytochrome c reductase complex (complex III or cytochrome b-c1 complex) that is part of the mitochondrial respiratory chain. The b-c1 complex mediates electron transfer from ubiquinol to cytochrome c. Contributes to the generation of a proton gradient across the mitochondrial membrane that is then used for ATP synthesis. The sequence is that of Cytochrome b (MT-CYB) from Simalia amethistina (Amethystine python).